Here is a 173-residue protein sequence, read N- to C-terminus: Lens fiber membrane intrinsic protein (173 aa).

At 1-3 the chain is on the cytoplasmic side; it reads MYS. Residues 4 to 24 traverse the membrane as a helical segment; it reads FMGGGLFCAWVGTILLVVAMA. At 25 to 66 the chain is on the extracellular side; it reads TDHWMQYRLSGSFAHQGLWRYCLGNKCYLQTDSIAYWNATRA. C-linked (Man) tryptophan glycosylation is found at Trp-43 and Trp-61. An N-linked (GlcNAc...) asparagine glycan is attached at Asn-62. Residues 67–87 form a helical membrane-spanning segment; sequence FMILSALCAISGIIMGIMAFA. Over 88–98 the chain is Cytoplasmic; it reads HQPTFSRISRP. Residues 99-119 form a helical membrane-spanning segment; the sequence is FSAGIMFFSSTLFVVLALAIY. At 120 to 140 the chain is on the extracellular side; that stretch reads TGVTVSFLGRRFGDWRFSWSY. Residues 141–161 form a helical membrane-spanning segment; it reads ILGWVAVLMTFFAGIFYMCAY. The Cytoplasmic segment spans residues 162–173; the sequence is RVHECRRLSTPR. Ser-170 bears the Phosphoserine mark. Thr-171 bears the Phosphothreonine mark.

Belongs to the PMP-22/EMP/MP20 family. As to quaternary structure, seems to be associated with itself or another lens membrane component via disulfide bonds. As to expression, eye lens specific.

It localises to the membrane. Its function is as follows. Present in the thicker 16-17 nm junctions of mammalian lens fiber cells, where it may contribute to cell junctional organization. Acts as a receptor for calmodulin. May play an important role in both lens development and cataractogenesis. In Homo sapiens (Human), this protein is Lens fiber membrane intrinsic protein (LIM2).